A 104-amino-acid polypeptide reads, in one-letter code: MDSYKVIELANKYSAAAEEVRSSKMLLESRLSALGDAWQGKARDSFDQDFEETKAAYDQFEQELLETSQELKAAAVKIEERKAEIARMEELERKAREERHKLGR.

A coiled-coil region spans residues 42 to 104 (ARDSFDQDFE…AREERHKLGR (63 aa)).

It belongs to the WXG100 family.

This is an uncharacterized protein from Bacillus subtilis (strain 168).